The following is a 419-amino-acid chain: Maltoporin 2 (419 aa).

The first 23 residues, Met-1–Ala-23, serve as a signal peptide directing secretion.

Belongs to the porin LamB (TC 1.B.3) family. Homotrimer formed of three 18-stranded antiparallel beta-barrels, containing three independent channels.

The protein resides in the cell outer membrane. The catalysed reaction is beta-maltose(in) = beta-maltose(out). Functionally, involved in the transport of maltose and maltodextrins. The polypeptide is Maltoporin 2 (Yersinia pestis bv. Antiqua (strain Antiqua)).